The following is a 166-amino-acid chain: Disulfide bond formation protein B (166 aa).

Residues 1-11 are Cytoplasmic-facing; the sequence is MQSFAFSTRAL. The chain crosses the membrane as a helical span at residues 12-28; sequence FLGLFAVCAGLLGFGLY. Residues 29 to 46 lie on the Periplasmic side of the membrane; the sequence is LQHAVGLEPCPMCIMQRY. The cysteines at positions 38 and 41 are disulfide-linked. A helical membrane pass occupies residues 47-63; the sequence is AFVAIALTALVAGLHGP. Over 64 to 70 the chain is Cytoplasmic; it reads GRRGTRA. A helical transmembrane segment spans residues 71–87; it reads YAAVILLLALAGGGVAL. Residues 88–143 are Periplasmic-facing; sequence RQTWMQLYPPEFAECGPDLEFMLGSFPLADALPMIFQGAGDCSKVDWAFLGLSIAN. Cys102 and Cys129 are disulfide-bonded. A helical membrane pass occupies residues 144–162; the sequence is WSLVCLTLVAVFAIMMIAR. The Cytoplasmic segment spans residues 163-166; the sequence is KRGG.

This sequence belongs to the DsbB family.

The protein localises to the cell inner membrane. In terms of biological role, required for disulfide bond formation in some periplasmic proteins. Acts by oxidizing the DsbA protein. The chain is Disulfide bond formation protein B from Aromatoleum aromaticum (strain DSM 19018 / LMG 30748 / EbN1) (Azoarcus sp. (strain EbN1)).